The sequence spans 107 residues: Large ribosomal subunit protein uL23 (107 aa).

This sequence belongs to the universal ribosomal protein uL23 family. As to quaternary structure, part of the 50S ribosomal subunit. Contacts protein L29, and trigger factor when it is bound to the ribosome.

In terms of biological role, one of the early assembly proteins it binds 23S rRNA. One of the proteins that surrounds the polypeptide exit tunnel on the outside of the ribosome. Forms the main docking site for trigger factor binding to the ribosome. This chain is Large ribosomal subunit protein uL23, found in Gluconobacter oxydans (strain 621H) (Gluconobacter suboxydans).